Reading from the N-terminus, the 107-residue chain is Proteinase inhibitor I-B (107 aa).

Residues Met1–Ala22 form the signal peptide. Residues Arg23–Cys39 constitute a propeptide that is removed on maturation.

This sequence belongs to the protease inhibitor I13 (potato type I serine protease inhibitor) family.

The protein localises to the secreted. The chain is Proteinase inhibitor I-B (TIMPA) from Nicotiana tabacum (Common tobacco).